We begin with the raw amino-acid sequence, 651 residues long: Acetyl-coenzyme A synthetase (651 aa).

Residues 191-194 (RGGK), threonine 311, and asparagine 335 each bind CoA. Residues 387–389 (GEP), 411–416 (DTWWQT), aspartate 500, and arginine 515 each bind ATP. CoA is bound at residue serine 523. Arginine 526 is a binding site for ATP. Mg(2+) is bound by residues valine 537, histidine 539, and valine 542. Arginine 584 contacts CoA. Lysine 609 bears the N6-acetyllysine mark.

It belongs to the ATP-dependent AMP-binding enzyme family. Requires Mg(2+) as cofactor. Post-translationally, acetylated. Deacetylation by the SIR2-homolog deacetylase activates the enzyme.

The catalysed reaction is acetate + ATP + CoA = acetyl-CoA + AMP + diphosphate. Catalyzes the conversion of acetate into acetyl-CoA (AcCoA), an essential intermediate at the junction of anabolic and catabolic pathways. AcsA undergoes a two-step reaction. In the first half reaction, AcsA combines acetate with ATP to form acetyl-adenylate (AcAMP) intermediate. In the second half reaction, it can then transfer the acetyl group from AcAMP to the sulfhydryl group of CoA, forming the product AcCoA. This chain is Acetyl-coenzyme A synthetase, found in Pseudomonas savastanoi pv. phaseolicola (strain 1448A / Race 6) (Pseudomonas syringae pv. phaseolicola (strain 1448A / Race 6)).